Reading from the N-terminus, the 478-residue chain is BTB/POZ domain-containing protein 17 (478 aa).

Residues 1 to 28 (MPRRGYSKPGSWGSFWAMLTLVGLVTHA) form the signal peptide. Asparagine 61, asparagine 100, and asparagine 195 each carry an N-linked (GlcNAc...) asparagine glycan. A BTB domain is found at 63–132 (SDVVLRVQAA…LYCGELTVLL (70 aa)). In terms of domain architecture, BACK spans 169-269 (AVGWYHYAVG…IPPAQLFQLQ (101 aa)).

The protein localises to the secreted. The sequence is that of BTB/POZ domain-containing protein 17 (BTBD17) from Homo sapiens (Human).